Here is a 402-residue protein sequence, read N- to C-terminus: Putative F-box protein At4g22180 (402 aa).

The region spanning 18 to 64 (PNSWSELPLDLLTAVFERLSYANFQRAKSVCSSWHSGSRQSVPIQIP) is the F-box domain.

This Arabidopsis thaliana (Mouse-ear cress) protein is Putative F-box protein At4g22180.